The sequence spans 123 residues: F-box protein PP2-B3 (123 aa).

In terms of domain architecture, F-box spans Pro-10–Phe-56.

This Arabidopsis thaliana (Mouse-ear cress) protein is F-box protein PP2-B3 (PP2B3).